Here is a 333-residue protein sequence, read N- to C-terminus: Cytosolic sulfotransferase 10 (333 aa).

76–81 (KSGTTW) provides a ligand contact to 3'-phosphoadenylyl sulfate. His-146 functions as the Proton acceptor in the catalytic mechanism. Residues Arg-168, Ser-176, Tyr-234, and 299 to 301 (RKG) each bind 3'-phosphoadenylyl sulfate.

It belongs to the sulfotransferase 1 family. In terms of tissue distribution, expressed in roots.

The protein resides in the cytoplasm. In terms of biological role, sulfotransferase that utilizes 3'-phospho-5'-adenylyl sulfate (PAPS) as sulfonate donor to specifically catalyze the sulfate conjugation of brassinosteroids, including castasterone (CS), brassinolide (BL), related 24-epimers, and the naturally occurring (22R, 23R)-28-homobrassinosteroids. No activity on phenolic acids, desulfo-glucosinolates, flavonoids, steroids, gibberellic acids, cytokinins, phenylpropanoids, hydroxyjasmonates and coumarins. The chain is Cytosolic sulfotransferase 10 (SOT10) from Arabidopsis thaliana (Mouse-ear cress).